We begin with the raw amino-acid sequence, 220 residues long: Translation initiation factor 6 (220 aa).

This sequence belongs to the eIF-6 family.

Functionally, binds to the 50S ribosomal subunit and prevents its association with the 30S ribosomal subunit to form the 70S initiation complex. The polypeptide is Translation initiation factor 6 (Pyrobaculum aerophilum (strain ATCC 51768 / DSM 7523 / JCM 9630 / CIP 104966 / NBRC 100827 / IM2)).